The sequence spans 323 residues: Non-structural protein 9 (323 aa).

A disordered region spans residues 1–142 (MFTSSAAKTG…GGSRPSQERG (142 aa)). Residues 33 to 49 (IDGSISSGPISTGPDSD) show a composition bias toward low complexity. Over residues 99–115 (PNHTDIGTSLGQVTTKG) the composition is skewed to polar residues.

The protein resides in the host cytoplasm. In terms of biological role, constituent of viral factories. The polypeptide is Non-structural protein 9 (Rice gall dwarf virus (RGDV)).